The primary structure comprises 37 residues: Photosystem I reaction center subunit VIII (37 aa).

A helical transmembrane segment spans residues 10–30; the sequence is IFVPLVGLVFPAIAMASLSLY.

The protein belongs to the PsaI family.

It localises to the plastid. It is found in the chloroplast thylakoid membrane. In terms of biological role, may help in the organization of the PsaL subunit. This is Photosystem I reaction center subunit VIII from Gossypium hirsutum (Upland cotton).